The following is a 106-amino-acid chain: UPF0235 protein OCAR_4310/OCA5_c02140 (106 aa).

This sequence belongs to the UPF0235 family.

The chain is UPF0235 protein OCAR_4310/OCA5_c02140 from Afipia carboxidovorans (strain ATCC 49405 / DSM 1227 / KCTC 32145 / OM5) (Oligotropha carboxidovorans).